Here is a 422-residue protein sequence, read N- to C-terminus: Probable FBD-associated F-box protein At1g32375 (422 aa).

The region spanning methionine 1 to isoleucine 53 is the F-box domain. Residues cysteine 342–serine 392 form the FBD domain.

The chain is Probable FBD-associated F-box protein At1g32375 from Arabidopsis thaliana (Mouse-ear cress).